A 600-amino-acid chain; its full sequence is DNA mismatch repair protein MutL (600 aa).

The tract at residues 327-405 (DGSRAATTGA…FSPQPAAAEP (79 aa)) is disordered. Residues 349-367 (PNSQRPQTAWSAETSSSRP) are compositionally biased toward polar residues.

The protein belongs to the DNA mismatch repair MutL/HexB family.

In terms of biological role, this protein is involved in the repair of mismatches in DNA. It is required for dam-dependent methyl-directed DNA mismatch repair. May act as a 'molecular matchmaker', a protein that promotes the formation of a stable complex between two or more DNA-binding proteins in an ATP-dependent manner without itself being part of a final effector complex. This chain is DNA mismatch repair protein MutL, found in Rhizobium johnstonii (strain DSM 114642 / LMG 32736 / 3841) (Rhizobium leguminosarum bv. viciae).